The primary structure comprises 409 residues: MDKLLERFLHYVSLDTQSKSGVRQVPSTEGQWKLLRLLKQQLEEMGLVNITLSEKGTLMATLPANVEGDIPAIGFISHVDTSPDFSGKNVNPQIVENYRGGDIALGIGDEVLSPVMFPVLHQLLGQTLITTDGKTLLGADDKAGVAEIMTALAVLKGNPIPHGEIKVAFTPDEEVGKGAKHFDVEEFGAQWAYTVDGGGVGELEFENFNAASVNIKIVGNNVHPGTAKGVMVNALSLAARIHAEVPADEAPETTEGYEGFYHLASMKGTVDRAEMHYIIRDFDRKQFEARKRKMMEIAKKVGKGLHPDCYIELVIEDSYYNMREKVVEHPHILDIAQQAMRDCHITPEMKPIRGGTDGAQLSFMGLPCPNLFTGGYNYHGKHEFVTLEGMEKAVQVIVRIAELTAKRGQ.

Residue His-78 participates in Zn(2+) binding. The active site involves Asp-80. A Zn(2+)-binding site is contributed by Asp-140. Residue Glu-173 is the Proton acceptor of the active site. Zn(2+)-binding residues include Glu-174, Asp-196, and His-379.

The protein belongs to the peptidase M20B family. Requires Zn(2+) as cofactor.

The protein localises to the cytoplasm. It catalyses the reaction Release of the N-terminal residue from a tripeptide.. Cleaves the N-terminal amino acid of tripeptides. The chain is Peptidase T from Salmonella paratyphi A (strain ATCC 9150 / SARB42).